The primary structure comprises 172 residues: Keratin-associated protein 13-1 (172 aa).

Tandem repeats lie at residues 46 to 55 (CQLGSSLYRG), 56 to 65 (CQQTCWEPTS), 66 to 75 (CQTSYVESSP), 76 to 85 (CQTSCYRPRT), and 92 to 101 (CQTTYSGSLG). The 5 X 10 AA approximate repeats stretch occupies residues 46–101 (CQLGSSLYRGCQQTCWEPTSCQTSYVESSPCQTSCYRPRTSLLCSPCQTTYSGSLG).

It belongs to the PMG family. In terms of assembly, interacts with hair keratins. As to expression, weak expression seen in the late matrix and entire cortex area of the hair follicle.

In the hair cortex, hair keratin intermediate filaments are embedded in an interfilamentous matrix, consisting of hair keratin-associated proteins (KRTAP), which are essential for the formation of a rigid and resistant hair shaft through their extensive disulfide bond cross-linking with abundant cysteine residues of hair keratins. The matrix proteins include the high-sulfur and high-glycine-tyrosine keratins. The protein is Keratin-associated protein 13-1 (KRTAP13-1) of Homo sapiens (Human).